The chain runs to 175 residues: MTTICAVKHNGKTAIAGDGQVTLGEKVIMKGSARKVRRIYNDKVAVGFAGGVADAINLEEKFENKLNEYSGNLERAAVELAQEWRGDRTLQKLEAMLIVIDKDNLLIVSGSGEVIVPDNGVLAIGSGGNYAQAAAVALSEYSKDMSAGEIAKAALNIAADIDIFTNHNIIVEELA.

Residue Thr2 is part of the active site. Ala159, Asp162, and Thr165 together coordinate Na(+).

Belongs to the peptidase T1B family. HslV subfamily. As to quaternary structure, a double ring-shaped homohexamer of HslV is capped on each side by a ring-shaped HslU homohexamer. The assembly of the HslU/HslV complex is dependent on binding of ATP.

Its subcellular location is the cytoplasm. The catalysed reaction is ATP-dependent cleavage of peptide bonds with broad specificity.. With respect to regulation, allosterically activated by HslU binding. Protease subunit of a proteasome-like degradation complex believed to be a general protein degrading machinery. The chain is ATP-dependent protease subunit HslV from Ligilactobacillus salivarius (strain UCC118) (Lactobacillus salivarius).